A 481-amino-acid polypeptide reads, in one-letter code: Alginate biosynthesis protein AlgA (481 aa).

It belongs to the mannose-6-phosphate isomerase type 2 family. Monomer. The cofactor is Co(2+).

The catalysed reaction is D-mannose 6-phosphate = D-fructose 6-phosphate. It catalyses the reaction alpha-D-mannose 1-phosphate + GTP + H(+) = GDP-alpha-D-mannose + diphosphate. The protein operates within nucleotide-sugar biosynthesis; GDP-alpha-D-mannose biosynthesis; GDP-alpha-D-mannose from alpha-D-mannose 1-phosphate (GTP route): step 1/1. It participates in nucleotide-sugar biosynthesis; GDP-alpha-D-mannose biosynthesis; alpha-D-mannose 1-phosphate from D-fructose 6-phosphate: step 1/2. In terms of biological role, produces a precursor for alginate polymerization. The alginate layer provides a protective barrier against host immune defenses and antibiotics. In Pseudomonas aeruginosa (strain ATCC 15692 / DSM 22644 / CIP 104116 / JCM 14847 / LMG 12228 / 1C / PRS 101 / PAO1), this protein is Alginate biosynthesis protein AlgA (algA).